We begin with the raw amino-acid sequence, 790 residues long: Chorion peroxidase (790 aa).

A signal peptide spans methionine 1–serine 16. Residues threonine 17–arginine 209 constitute a propeptide that is removed on maturation. Position 210 is an N-acetylcysteine; in Chorion peroxidase light chain (cysteine 210). The cysteines at positions 216 and 229 are disulfide-linked. Tryptophan 259 carries N-linked (Man) tryptophan glycosylation. Histidine 305 (proton acceptor) is an active-site residue. Asparagine 327 is a glycosylation site (N-linked (GlcNAc...) asparagine). Tyrosine 353 carries the post-translational modification 3',4'-dihydroxyphenylalanine. A disulfide bond links cysteine 433 and cysteine 440. Residue tryptophan 479 is glycosylated (N-linked (Man) tryptophan). Residue histidine 551 participates in heme b binding. Tryptophan 680 carries an N-linked (Man) tryptophan glycan. Cysteines 746 and 774 form a disulfide. Tryptophan 785 carries an N-linked (Man) tryptophan glycan.

This sequence belongs to the peroxidase family. XPO subfamily. Heterodimer. Requires heme b as cofactor. N-glycosylated on Trp by mannose and on Asn by N-acetylglucosamine. In terms of processing, there is a hexose glycosylation of an unidentified residue between 654 and 708; Trp-680 is conserved in closely related species and is probably mannosylated.

Its subcellular location is the secreted. The enzyme catalyses 2 a phenolic donor + H2O2 = 2 a phenolic radical donor + 2 H2O. Its activity is regulated as follows. Extremely resistant to denaturating agents, such as SDS and organic solvents. Functionally, involved in the formation of a rigid and insoluble egg chorion by catalyzing chorion protein cross-linking through dityrosine formation and phenol oxidase-catalyzed chorion melanization. This Aedes aegypti (Yellowfever mosquito) protein is Chorion peroxidase (pxt).